The chain runs to 541 residues: 5' exonuclease Apollo (541 aa).

K334 participates in a covalent cross-link: Glycyl lysine isopeptide (Lys-Gly) (interchain with G-Cter in SUMO2). Disordered stretches follow at residues 350-375 and 450-489; these read TQGVVFESPEEKADQVKVDRDSKKHK and IGLGSPLWSGGGSGSPTRGKQSNGMGCGSPPTHISRTTHL. The span at 358–371 shows a compositional bias: basic and acidic residues; the sequence is PEEKADQVKVDRDS. A TBM motif is present at residues 492-507; sequence ESGGLALKYLLTPVDF.

It belongs to the DNA repair metallo-beta-lactamase (DRMBL) family. As to quaternary structure, interacts with TERF2; the interaction is direct. Interacts with MUS81, MRE11 and FANCD2. Interacts with HSPA2, HSPA8 and HSPA14. Interacts with SPAG5. Ubiquitinated, leading to its degradation. Interaction with TERF2 protects it from ubiquitination.

It is found in the chromosome. The protein localises to the telomere. The protein resides in the nucleus. It localises to the cytoplasm. Its subcellular location is the cytoskeleton. It is found in the microtubule organizing center. The protein localises to the centrosome. The catalysed reaction is a beta-lactam + H2O = a substituted beta-amino acid. Functionally, 5'-3' exonuclease that plays a central role in telomere maintenance and protection during S-phase. Participates in the protection of telomeres against non-homologous end-joining (NHEJ)-mediated repair, thereby ensuring that telomeres do not fuse. Plays a key role in telomeric loop (T loop) formation by being recruited by TERF2 at the leading end telomeres and by processing leading-end telomeres immediately after their replication via its exonuclease activity: generates 3' single-stranded overhang at the leading end telomeres avoiding blunt leading-end telomeres that are vulnerable to end-joining reactions and expose the telomere end in a manner that activates the DNA repair pathways. Together with TERF2, required to protect telomeres from replicative damage during replication by controlling the amount of DNA topoisomerase (TOP1, TOP2A and TOP2B) needed for telomere replication during fork passage and prevent aberrant telomere topology. Also involved in response to DNA damage: plays a role in response to DNA interstrand cross-links (ICLs) by facilitating double-strand break formation. In case of spindle stress, involved in prophase checkpoint. Possesses beta-lactamase activity, catalyzing the hydrolysis of penicillin G and nitrocefin. Exhibits no activity towards other beta-lactam antibiotic classes including cephalosporins (cefotaxime) and carbapenems (imipenem). This is 5' exonuclease Apollo (Dclre1b) from Rattus norvegicus (Rat).